Reading from the N-terminus, the 500-residue chain is FAD-linked oxidoreductase easE (500 aa).

Residues 37–220 (QGRIPLFTVG…TRATMRVFPD (184 aa)) enclose the FAD-binding PCMH-type domain.

The protein belongs to the oxygen-dependent FAD-linked oxidoreductase family. Requires FAD as cofactor.

Its pathway is alkaloid biosynthesis; ergot alkaloid biosynthesis. Functionally, FAD-linked oxidoreductase; part of the gene cluster that mediates the biosynthesis of fungal ergot alkaloid. DmaW catalyzes the first step of ergot alkaloid biosynthesis by condensing dimethylallyl diphosphate (DMAP) and tryptophan to form 4-dimethylallyl-L-tryptophan. The second step is catalyzed by the methyltransferase easF that methylates 4-dimethylallyl-L-tryptophan in the presence of S-adenosyl-L-methionine, resulting in the formation of 4-dimethylallyl-L-abrine. The catalase easC and the FAD-dependent oxidoreductase easE then transform 4-dimethylallyl-L-abrine to chanoclavine-I which is further oxidized by easD in the presence of NAD(+), resulting in the formation of chanoclavine-I aldehyde. Chanoclavine-I aldehyde is the precursor of ergoamides and ergopeptines in Clavicipitaceae, and clavine-type alcaloids such as fumiclavine in Trichocomaceae. However, the metabolites downstream of chanoclavine-I aldehyde in Arthrodermataceae have not been identified yet. The protein is FAD-linked oxidoreductase easE of Arthroderma benhamiae (strain ATCC MYA-4681 / CBS 112371) (Trichophyton mentagrophytes).